A 201-amino-acid polypeptide reads, in one-letter code: 3-isopropylmalate dehydratase small subunit (201 aa).

It belongs to the LeuD family. LeuD type 1 subfamily. In terms of assembly, heterodimer of LeuC and LeuD.

The enzyme catalyses (2R,3S)-3-isopropylmalate = (2S)-2-isopropylmalate. Its pathway is amino-acid biosynthesis; L-leucine biosynthesis; L-leucine from 3-methyl-2-oxobutanoate: step 2/4. Its function is as follows. Catalyzes the isomerization between 2-isopropylmalate and 3-isopropylmalate, via the formation of 2-isopropylmaleate. The sequence is that of 3-isopropylmalate dehydratase small subunit from Escherichia coli O9:H4 (strain HS).